The sequence spans 528 residues: Glucose-6-phosphate isomerase (528 aa).

The active-site Proton donor is E322. Residues H351 and K455 contribute to the active site.

This sequence belongs to the GPI family.

The protein resides in the cytoplasm. The enzyme catalyses alpha-D-glucose 6-phosphate = beta-D-fructose 6-phosphate. It functions in the pathway carbohydrate biosynthesis; gluconeogenesis. Its pathway is carbohydrate degradation; glycolysis; D-glyceraldehyde 3-phosphate and glycerone phosphate from D-glucose: step 2/4. Functionally, catalyzes the reversible isomerization of glucose-6-phosphate to fructose-6-phosphate. The protein is Glucose-6-phosphate isomerase of Nostoc punctiforme (strain ATCC 29133 / PCC 73102).